The sequence spans 347 residues: GPN-loop GTPase 2 (347 aa).

Residue 12-17 (GSGKST) coordinates GTP. Positions 69–71 (GPN) match the Gly-Pro-Asn (GPN)-loop; involved in dimer interface motif. 175-178 (SKID) provides a ligand contact to GTP.

This sequence belongs to the GPN-loop GTPase family. In terms of assembly, heterodimers with NPA3/GPN1 or GPN3. Binds to RNA polymerase II (RNAPII).

It is found in the cytoplasm. Its function is as follows. Small GTPase required for proper localization of RNA polymerase II and III (RNAPII and RNAPIII). May act at an RNAP assembly step prior to nuclear import. Required for establishment of sister chromatid cohesion. The polypeptide is GPN-loop GTPase 2 (Saccharomyces cerevisiae (strain ATCC 204508 / S288c) (Baker's yeast)).